The sequence spans 226 residues: Enolase-phosphatase E1 (226 aa).

The protein belongs to the HAD-like hydrolase superfamily. MasA/MtnC family. As to quaternary structure, monomer. Mg(2+) serves as cofactor.

It carries out the reaction 5-methylsulfanyl-2,3-dioxopentyl phosphate + H2O = 1,2-dihydroxy-5-(methylsulfanyl)pent-1-en-3-one + phosphate. It functions in the pathway amino-acid biosynthesis; L-methionine biosynthesis via salvage pathway; L-methionine from S-methyl-5-thio-alpha-D-ribose 1-phosphate: step 3/6. It participates in amino-acid biosynthesis; L-methionine biosynthesis via salvage pathway; L-methionine from S-methyl-5-thio-alpha-D-ribose 1-phosphate: step 4/6. Its function is as follows. Bifunctional enzyme that catalyzes the enolization of 2,3-diketo-5-methylthiopentyl-1-phosphate (DK-MTP-1-P) into the intermediate 2-hydroxy-3-keto-5-methylthiopentenyl-1-phosphate (HK-MTPenyl-1-P), which is then dephosphorylated to form the acireductone 1,2-dihydroxy-3-keto-5-methylthiopentene (DHK-MTPene). The protein is Enolase-phosphatase E1 of Shewanella sp. (strain ANA-3).